Here is a 193-residue protein sequence, read N- to C-terminus: Protein B4 (193 aa).

The next 3 helical transmembrane spans lie at 15-35, 36-56, and 160-180; these read FFVCIFLCVFFCVCIFLCVFF, CVYFFVCVFFCVCFFVCVFFV, and LSLCGSAFCLSFSLARAIVFS.

Its subcellular location is the host membrane. The sequence is that of Protein B4 (B4) from Homo sapiens (Human).